The chain runs to 302 residues: tRNA-cytidine(32) 2-sulfurtransferase (302 aa).

The PP-loop motif signature appears at 44-49; sequence SGGKDS. [4Fe-4S] cluster is bound by residues Cys-119, Cys-122, and Cys-210.

The protein belongs to the TtcA family. Homodimer. Mg(2+) is required as a cofactor. The cofactor is [4Fe-4S] cluster.

Its subcellular location is the cytoplasm. The enzyme catalyses cytidine(32) in tRNA + S-sulfanyl-L-cysteinyl-[cysteine desulfurase] + AH2 + ATP = 2-thiocytidine(32) in tRNA + L-cysteinyl-[cysteine desulfurase] + A + AMP + diphosphate + H(+). It participates in tRNA modification. Its function is as follows. Catalyzes the ATP-dependent 2-thiolation of cytidine in position 32 of tRNA, to form 2-thiocytidine (s(2)C32). The sulfur atoms are provided by the cysteine/cysteine desulfurase (IscS) system. The polypeptide is tRNA-cytidine(32) 2-sulfurtransferase (Teredinibacter turnerae (strain ATCC 39867 / T7901)).